Consider the following 913-residue polypeptide: Probable TonB-dependent receptor HI_1217 (913 aa).

Positions 1-27 are cleaved as a signal peptide; it reads MKKAIKLNLITLGLINTIGMTITQAQA. A TBDR plug domain is found at 42–165; that stretch reads SNDKKPFTEA…LAGSANFRTL (124 aa). The TBDR beta-barrel domain occupies 176 to 913; sequence PFGIILKGMT…TYILSLNYKF (738 aa). The short motif at 896–913 is the TonB C-terminal box element; it reads LYNFARGRTYILSLNYKF.

The protein belongs to the TonB-dependent receptor family.

It localises to the cell outer membrane. Probable receptor, TonB-dependent. The protein is Probable TonB-dependent receptor HI_1217 of Haemophilus influenzae (strain ATCC 51907 / DSM 11121 / KW20 / Rd).